A 1144-amino-acid polypeptide reads, in one-letter code: Adenylate cyclase type 3 (1144 aa).

Over 1-79 the chain is Cytoplasmic; the sequence is MTEDQGFSDP…FKRQRHETLL (79 aa). 5 helical membrane-spanning segments follow: residues 80 to 100, 105 to 125, 139 to 159, 173 to 193, and 226 to 246; these read VLVV…AVVF, LAPL…FVLC, VPYL…GLNF, AFFV…IVII, and ILAN…SYYM. Residues D324, I325, and D368 each coordinate Mg(2+). Residues 324–329 and 366–368 each bind ATP; these read DIVGFT and LGD. Residues 381-401 form a helical membrane-spanning segment; it reads EDHAVCSILMGLAMVEAISYV. Topologically, residues 402 to 630 are cytoplasmic; that stretch reads REKTKTGVDM…RYSVEKEKQS (229 aa). An ATP-binding site is contributed by R412. Residue K465 forms a Glycyl lysine isopeptide (Lys-Gly) (interchain with G-Cter in SUMO3) linkage. The segment at 504–563 is disordered; the sequence is QNGLNGSALPNGAPASKPSSPALIETKEPNGSAHASGSTSEEAEEQEAQADNPSFPNPRR. S523 is subject to Phosphoserine. Residues 534–543 are compositionally biased toward low complexity; the sequence is GSAHASGSTS. S578 carries the phosphoserine modification. The next 3 membrane-spanning stretches (helical) occupy residues 631 to 651, 662 to 682, and 706 to 726; these read GAAF…EILI, FVVG…AIFP, and WAML…LSCL. N734 is a glycosylation site (N-linked (GlcNAc...) asparagine). Helical transmembrane passes span 755–775, 777–797, and 833–853; these read VAVL…MVKL, LMLL…CPVF, and LPLV…MLSF. The Cytoplasmic portion of the chain corresponds to 854–1144; that stretch reads YYFSRHVEKL…TLPHQVVDNP (291 aa). Residues K975, 1062-1064, and 1069-1073 contribute to the ATP site; these read DIW and NVASR. S1076 is modified (phosphoserine; by CaMK2). Position 1109 (K1109) interacts with ATP.

This sequence belongs to the adenylyl cyclase class-4/guanylyl cyclase family. Requires Mg(2+) as cofactor. It depends on Mn(2+) as a cofactor. N-glycosylated. Post-translationally, sumoylated. Sumoylation is required for targeting ot olfactory cilia. In terms of processing, rapidly phosphorylated after stimulation by odorants or forskolin. Phosphorylation by CaMK2 at Ser-1076 down-regulates enzyme activity. Detected on cilia on the olfactory epithelium (at protein level). Detected on cilia on the olfactory epithelium.

The protein resides in the cell membrane. It localises to the golgi apparatus. Its subcellular location is the cell projection. The protein localises to the cilium. It is found in the cytoplasm. It catalyses the reaction ATP = 3',5'-cyclic AMP + diphosphate. Specifically activated by the G alpha protein GNAL/G(olf) in signaling cascades triggered by odorant receptors. Activated by forskolin. After forskolin treatment, activity is further increased by calcium/calmodulin. In the absence of forskolin, calcium/calmodulin has little effect on enzyme activity. Functionally, catalyzes the formation of the signaling molecule cAMP in response to G-protein signaling. Participates in signaling cascades triggered by odorant receptors via its function in cAMP biosynthesis: specifically activated by G alpha protein GNAL/G(olf) in olfactory epithelium. Required for the perception of odorants. Required for normal sperm motility and normal male fertility. Plays a role in regulating insulin levels and body fat accumulation in response to a high fat diet. This Rattus norvegicus (Rat) protein is Adenylate cyclase type 3.